The chain runs to 211 residues: Chaperone protein TorD (211 aa).

It belongs to the TorD/DmsD family. TorD subfamily.

It is found in the cytoplasm. Involved in the biogenesis of TorA. Acts on TorA before the insertion of the molybdenum cofactor and, as a result, probably favors a conformation of the apoenzyme that is competent for acquiring the cofactor. This chain is Chaperone protein TorD, found in Shewanella loihica (strain ATCC BAA-1088 / PV-4).